Reading from the N-terminus, the 220-residue chain is Ribose-5-phosphate isomerase A (220 aa).

Substrate contacts are provided by residues 25-28 (TGST), 80-83 (DGAD), and 93-96 (KGGG). E102 acts as the Proton acceptor in catalysis. K120 contacts substrate.

Belongs to the ribose 5-phosphate isomerase family. As to quaternary structure, homodimer.

It catalyses the reaction aldehydo-D-ribose 5-phosphate = D-ribulose 5-phosphate. The protein operates within carbohydrate degradation; pentose phosphate pathway; D-ribose 5-phosphate from D-ribulose 5-phosphate (non-oxidative stage): step 1/1. Functionally, catalyzes the reversible conversion of ribose-5-phosphate to ribulose 5-phosphate. The polypeptide is Ribose-5-phosphate isomerase A (Bacillus cereus (strain ZK / E33L)).